The sequence spans 224 residues: Cytidylate kinase (224 aa).

11–19 (GPAAAGKST) is an ATP binding site.

Belongs to the cytidylate kinase family. Type 1 subfamily.

It is found in the cytoplasm. The catalysed reaction is CMP + ATP = CDP + ADP. The enzyme catalyses dCMP + ATP = dCDP + ADP. The chain is Cytidylate kinase from Listeria welshimeri serovar 6b (strain ATCC 35897 / DSM 20650 / CCUG 15529 / CIP 8149 / NCTC 11857 / SLCC 5334 / V8).